A 257-amino-acid chain; its full sequence is tRNA-cytidine(32) 2-sulfurtransferase (257 aa).

The PP-loop motif signature appears at 37–42 (SGGKDS). [4Fe-4S] cluster-binding residues include C112, C115, and C202.

It belongs to the TtcA family. In terms of assembly, homodimer. The cofactor is Mg(2+). [4Fe-4S] cluster is required as a cofactor.

The protein localises to the cytoplasm. It catalyses the reaction cytidine(32) in tRNA + S-sulfanyl-L-cysteinyl-[cysteine desulfurase] + AH2 + ATP = 2-thiocytidine(32) in tRNA + L-cysteinyl-[cysteine desulfurase] + A + AMP + diphosphate + H(+). The protein operates within tRNA modification. In terms of biological role, catalyzes the ATP-dependent 2-thiolation of cytidine in position 32 of tRNA, to form 2-thiocytidine (s(2)C32). The sulfur atoms are provided by the cysteine/cysteine desulfurase (IscS) system. This Geobacter metallireducens (strain ATCC 53774 / DSM 7210 / GS-15) protein is tRNA-cytidine(32) 2-sulfurtransferase.